A 391-amino-acid chain; its full sequence is Na(+)/H(+) antiporter NhaA (391 aa).

Transmembrane regions (helical) follow at residues 14-34 (AGGILLLVAVVFAMLMANSPL), 59-79 (LLLWINDGLMALFFLLIGLEV), 95-115 (SLPSFAAIGGMLVPAGIYLLF), 124-144 (AGWAIPAATDIAFALGIMALL), 154-174 (VFLLALAIIDDLGVIVIIALF), 177-197 (SDLSTISLAIASVAILGLVGL), 213-233 (LILWVAVLKSGVHATLAGVII), 261-281 (FLILPVFAFANAGVALGNMSL), 290-310 (IGIALGLILGKPIGVMLFSFI), 328-348 (IAPVAAMCGIGFTMSMFIASL), and 363-383 (LGTLIGSFIAALVGYFWLSKV).

The protein belongs to the NhaA Na(+)/H(+) (TC 2.A.33) antiporter family.

Its subcellular location is the cell inner membrane. The enzyme catalyses Na(+)(in) + 2 H(+)(out) = Na(+)(out) + 2 H(+)(in). In terms of biological role, na(+)/H(+) antiporter that extrudes sodium in exchange for external protons. The protein is Na(+)/H(+) antiporter NhaA of Shewanella putrefaciens (strain CN-32 / ATCC BAA-453).